A 224-amino-acid polypeptide reads, in one-letter code: Ribose-5-phosphate isomerase A (224 aa).

Residues 26 to 29, 81 to 84, and 94 to 97 contribute to the substrate site; these read TGST, DGAD, and KGGG. Glu103 serves as the catalytic Proton acceptor. A substrate-binding site is contributed by Lys121.

Belongs to the ribose 5-phosphate isomerase family. In terms of assembly, homodimer.

The enzyme catalyses aldehydo-D-ribose 5-phosphate = D-ribulose 5-phosphate. Its pathway is carbohydrate degradation; pentose phosphate pathway; D-ribose 5-phosphate from D-ribulose 5-phosphate (non-oxidative stage): step 1/1. Functionally, catalyzes the reversible conversion of ribose-5-phosphate to ribulose 5-phosphate. The protein is Ribose-5-phosphate isomerase A of Listeria monocytogenes serotype 4b (strain CLIP80459).